Consider the following 178-residue polypeptide: Interleukin-10 (178 aa).

A signal peptide spans 1–18 (MHSSALLCCLVLLTGVRA). 2 cysteine pairs are disulfide-bonded: C30-C126 and C80-C132. An N-linked (GlcNAc...) asparagine glycan is attached at N134.

It belongs to the IL-10 family. Homodimer. Interacts with IL10RA and IL10RB. Produced by a variety of cell lines, including T-cells, macrophages, mast cells and other cell types.

The protein resides in the secreted. Major immune regulatory cytokine that acts on many cells of the immune system where it has profound anti-inflammatory functions, limiting excessive tissue disruption caused by inflammation. Mechanistically, IL10 binds to its heterotetrameric receptor comprising IL10RA and IL10RB leading to JAK1 and STAT2-mediated phosphorylation of STAT3. In turn, STAT3 translocates to the nucleus where it drives expression of anti-inflammatory mediators. Targets antigen-presenting cells (APCs) such as macrophages and monocytes and inhibits their release of pro-inflammatory cytokines including granulocyte-macrophage colony-stimulating factor /GM-CSF, granulocyte colony-stimulating factor/G-CSF, IL-1 alpha, IL-1 beta, IL-6, IL-8 and TNF-alpha. Also interferes with antigen presentation by reducing the expression of MHC-class II and co-stimulatory molecules, thereby inhibiting their ability to induce T cell activation. In addition, controls the inflammatory response of macrophages by reprogramming essential metabolic pathways including mTOR signaling. The chain is Interleukin-10 (IL10) from Homo sapiens (Human).